The primary structure comprises 376 residues: Riboflavin biosynthesis protein RibD (376 aa).

The interval 1 to 150 (MEDFSEQQLF…QPYLYQRTHN (150 aa)) is deaminase. Positions 6 to 128 (EQQLFFMRRA…MLRQAGIQVY (123 aa)) constitute a CMP/dCMP-type deaminase domain. Histidine 55 is a Zn(2+) binding site. Residue glutamate 57 is the Proton donor of the active site. Residues cysteine 80 and cysteine 89 each contribute to the Zn(2+) site. The interval 151–376 (FPWTILKSAA…SPQVFEPIRN (226 aa)) is reductase. Alanine 159 lines the NADP(+) pocket. Serine 173 is a binding site for substrate. Tryptophan 175 contributes to the NADP(+) binding site. Arginine 189 lines the substrate pocket. 2 residues coordinate NADP(+): threonine 201 and aspartate 205. Residues leucine 209 and arginine 212 each contribute to the substrate site. Serine 230 contacts NADP(+). Glutamate 300 serves as a coordination point for substrate. NADP(+) is bound at residue 302-308 (GTTLHTS).

The protein in the N-terminal section; belongs to the cytidine and deoxycytidylate deaminase family. This sequence in the C-terminal section; belongs to the HTP reductase family. Zn(2+) is required as a cofactor.

The catalysed reaction is 2,5-diamino-6-hydroxy-4-(5-phosphoribosylamino)-pyrimidine + H2O + H(+) = 5-amino-6-(5-phospho-D-ribosylamino)uracil + NH4(+). It carries out the reaction 5-amino-6-(5-phospho-D-ribitylamino)uracil + NADP(+) = 5-amino-6-(5-phospho-D-ribosylamino)uracil + NADPH + H(+). The protein operates within cofactor biosynthesis; riboflavin biosynthesis; 5-amino-6-(D-ribitylamino)uracil from GTP: step 2/4. Its pathway is cofactor biosynthesis; riboflavin biosynthesis; 5-amino-6-(D-ribitylamino)uracil from GTP: step 3/4. Its function is as follows. Converts 2,5-diamino-6-(ribosylamino)-4(3h)-pyrimidinone 5'-phosphate into 5-amino-6-(ribosylamino)-2,4(1h,3h)-pyrimidinedione 5'-phosphate. This is Riboflavin biosynthesis protein RibD (ribD) from Chlamydia pneumoniae (Chlamydophila pneumoniae).